Consider the following 446-residue polypeptide: Probable D-serine dehydratase (446 aa).

K116 carries the N6-(pyridoxal phosphate)lysine modification.

This sequence belongs to the serine/threonine dehydratase family. DsdA subfamily. Pyridoxal 5'-phosphate serves as cofactor.

The enzyme catalyses D-serine = pyruvate + NH4(+). The chain is Probable D-serine dehydratase from Bacillus cereus (strain ZK / E33L).